Here is a 456-residue protein sequence, read N- to C-terminus: 3-isopropylmalate dehydratase large subunit (456 aa).

Cysteine 336, cysteine 396, and cysteine 399 together coordinate [4Fe-4S] cluster.

It belongs to the aconitase/IPM isomerase family. LeuC type 1 subfamily. As to quaternary structure, heterodimer of LeuC and LeuD. [4Fe-4S] cluster is required as a cofactor.

The enzyme catalyses (2R,3S)-3-isopropylmalate = (2S)-2-isopropylmalate. Its pathway is amino-acid biosynthesis; L-leucine biosynthesis; L-leucine from 3-methyl-2-oxobutanoate: step 2/4. Catalyzes the isomerization between 2-isopropylmalate and 3-isopropylmalate, via the formation of 2-isopropylmaleate. The protein is 3-isopropylmalate dehydratase large subunit of Staphylococcus aureus (strain JH1).